Reading from the N-terminus, the 144-residue chain is Phosphomevalonate dehydratase small subunit (144 aa).

The active-site Proton acceptor is the S65.

The protein belongs to the AcnX type II small subunit family. As to quaternary structure, heterodimer composed of a large subunit (PMDh-L) and a small subunit (PMDh-S).

The catalysed reaction is (R)-5-phosphomevalonate = (2E)-3-methyl-5-phosphooxypent-2-enoate + H2O. The protein operates within isoprenoid biosynthesis; isopentenyl diphosphate biosynthesis via mevalonate pathway. Its function is as follows. Component of a hydro-lyase that catalyzes the dehydration of mevalonate 5-phosphate (MVA5P) to form trans-anhydromevalonate 5-phosphate (tAHMP). Involved in the archaeal mevalonate (MVA) pathway, which provides fundamental precursors for isoprenoid biosynthesis, such as isopentenyl diphosphate (IPP) and dimethylallyl diphosphate (DMAPP). This is Phosphomevalonate dehydratase small subunit from Methanosarcina acetivorans (strain ATCC 35395 / DSM 2834 / JCM 12185 / C2A).